Consider the following 133-residue polypeptide: ATP synthase epsilon chain (133 aa).

The protein belongs to the ATPase epsilon chain family. F-type ATPases have 2 components, CF(1) - the catalytic core - and CF(0) - the membrane proton channel. CF(1) has five subunits: alpha(3), beta(3), gamma(1), delta(1), epsilon(1). CF(0) has three main subunits: a, b and c.

The protein resides in the cell membrane. In terms of biological role, produces ATP from ADP in the presence of a proton gradient across the membrane. This chain is ATP synthase epsilon chain (atpC), found in Mycoplasma genitalium (strain ATCC 33530 / DSM 19775 / NCTC 10195 / G37) (Mycoplasmoides genitalium).